Here is a 316-residue protein sequence, read N- to C-terminus: Acetaldehyde dehydrogenase (316 aa).

Position 12–15 (12–15 (SGNI)) interacts with NAD(+). The active-site Acyl-thioester intermediate is the C132. NAD(+)-binding positions include 163 to 171 (SAGPGTRAN) and N289.

Belongs to the acetaldehyde dehydrogenase family.

The enzyme catalyses acetaldehyde + NAD(+) + CoA = acetyl-CoA + NADH + H(+). This is Acetaldehyde dehydrogenase (bphG) from Bordetella avium (strain 197N).